Here is a 242-residue protein sequence, read N- to C-terminus: DNA repair protein RecO (242 aa).

The protein belongs to the RecO family. In terms of assembly, monomer.

Functionally, involved in DNA repair and RecF pathway recombination. The sequence is that of DNA repair protein RecO from Shigella dysenteriae serotype 1 (strain Sd197).